Consider the following 349-residue polypeptide: Phosphate acyltransferase (349 aa).

It belongs to the PlsX family. In terms of assembly, homodimer. Probably interacts with PlsY.

It localises to the cytoplasm. It catalyses the reaction a fatty acyl-[ACP] + phosphate = an acyl phosphate + holo-[ACP]. It functions in the pathway lipid metabolism; phospholipid metabolism. Catalyzes the reversible formation of acyl-phosphate (acyl-PO(4)) from acyl-[acyl-carrier-protein] (acyl-ACP). This enzyme utilizes acyl-ACP as fatty acyl donor, but not acyl-CoA. In Rhodopseudomonas palustris (strain BisA53), this protein is Phosphate acyltransferase.